Consider the following 225-residue polypeptide: MKKNVQIKGTKDGISIFLSDKASILELQQELSQLLADKKQNPYSGEKLEVQVQIGNRLFSEEEELEISTIIHNNSQMEISAFYSNVMSKDDAKKWKERDQIFSMATIIRSGQVVQVPGDFLLIGDVNPGGQIRSNGNVFVLGNIKGIIHAGFEGDKNAVVAGKFLYPSQVRIADKVYGFDSEDYKEVVDTDLFSAFVNDTDEIVIDEIHKIRKIRPEISNFQGGR.

This sequence belongs to the MinC family. Interacts with MinD and FtsZ.

Cell division inhibitor that blocks the formation of polar Z ring septums. Rapidly oscillates between the poles of the cell to destabilize FtsZ filaments that have formed before they mature into polar Z rings. Prevents FtsZ polymerization. This chain is Probable septum site-determining protein MinC, found in Listeria welshimeri serovar 6b (strain ATCC 35897 / DSM 20650 / CCUG 15529 / CIP 8149 / NCTC 11857 / SLCC 5334 / V8).